The primary structure comprises 492 residues: N-succinylglutamate 5-semialdehyde dehydrogenase (492 aa).

Position 220-225 (G220–G225) interacts with NAD(+). Active-site residues include E243 and C277.

Belongs to the aldehyde dehydrogenase family. AstD subfamily.

It catalyses the reaction N-succinyl-L-glutamate 5-semialdehyde + NAD(+) + H2O = N-succinyl-L-glutamate + NADH + 2 H(+). Its pathway is amino-acid degradation; L-arginine degradation via AST pathway; L-glutamate and succinate from L-arginine: step 4/5. Its function is as follows. Catalyzes the NAD-dependent reduction of succinylglutamate semialdehyde into succinylglutamate. This is N-succinylglutamate 5-semialdehyde dehydrogenase from Escherichia coli O81 (strain ED1a).